The primary structure comprises 527 residues: NAD(P)H-quinone oxidoreductase chain 4 1 (527 aa).

The next 14 helical transmembrane spans lie at 5 to 25 (FPWL…LPII), 35 to 55 (WYSL…FCTG), 90 to 110 (LIIL…PVSF), 112 to 132 (PKLF…VFAV), 136 to 156 (LLFF…LSIW), 168 to 188 (FILY…TMAF), 211 to 231 (LLLY…FPLH), 242 to 262 (TAPA…YALL), 274 to 294 (AVFA…AALT), 310 to 330 (ISHM…GLSG), 331 to 351 (AVLQ…LVGA), 386 to 406 (LALP…GFAT), 416 to 436 (VLVI…LLSM), and 463 to 483 (VFII…PKIV).

It belongs to the complex I subunit 4 family.

It localises to the cellular thylakoid membrane. The catalysed reaction is a plastoquinone + NADH + (n+1) H(+)(in) = a plastoquinol + NAD(+) + n H(+)(out). It catalyses the reaction a plastoquinone + NADPH + (n+1) H(+)(in) = a plastoquinol + NADP(+) + n H(+)(out). Its function is as follows. NDH-1 shuttles electrons from NAD(P)H, via FMN and iron-sulfur (Fe-S) centers, to quinones in the respiratory chain. The immediate electron acceptor for the enzyme in this species is believed to be plastoquinone. Couples the redox reaction to proton translocation (for every two electrons transferred, four hydrogen ions are translocated across the cytoplasmic membrane), and thus conserves the redox energy in a proton gradient. This Trichodesmium erythraeum (strain IMS101) protein is NAD(P)H-quinone oxidoreductase chain 4 1.